A 311-amino-acid polypeptide reads, in one-letter code: Protein translocase subunit SecF (311 aa).

The next 6 membrane-spanning stretches (helical) occupy residues 19-39 (AIYASLFLIGVSLVSLFTQGL), 142-162 (MLAMLYAMVAILIYISFRFEL), 166-186 (LGAVLALVHDVVLTMGFFSVL), 192-212 (LVVVAALLTVVGYSLNDTIVV), 245-265 (ITSLTTVLVLIALFVLGGAVI), and 272-292 (LLFGVGIGTYSSIFVASPLVL).

It belongs to the SecD/SecF family. SecF subfamily. Forms a complex with SecD. Part of the essential Sec protein translocation apparatus which comprises SecA, SecYEG and auxiliary proteins SecDF-YajC and YidC.

Its subcellular location is the cell inner membrane. In terms of biological role, part of the Sec protein translocase complex. Interacts with the SecYEG preprotein conducting channel. SecDF uses the proton motive force (PMF) to complete protein translocation after the ATP-dependent function of SecA. The polypeptide is Protein translocase subunit SecF (Magnetococcus marinus (strain ATCC BAA-1437 / JCM 17883 / MC-1)).